Consider the following 625-residue polypeptide: Probable potassium transport system protein Kup 1 (625 aa).

The next 12 helical transmembrane spans lie at 14-34 (LSLL…TSPL), 50-70 (AAAV…ITTV), 104-124 (IVAL…ITPA), 139-159 (PALQ…LFAI), 170-190 (LFGP…LVGI), 213-233 (GATG…AEAL), 249-269 (WFAV…ALVI), 287-307 (LLLP…QSVI), 339-359 (IYVG…TIGF), 368-388 (AYGI…FIAM), 396-416 (LLAA…FFLA), and 421-441 (IAEG…LMWI).

This sequence belongs to the HAK/KUP transporter (TC 2.A.72) family.

It localises to the cell inner membrane. The catalysed reaction is K(+)(in) + H(+)(in) = K(+)(out) + H(+)(out). Its function is as follows. Transport of potassium into the cell. Likely operates as a K(+):H(+) symporter. The protein is Probable potassium transport system protein Kup 1 of Bradyrhizobium sp. (strain ORS 278).